Reading from the N-terminus, the 414-residue chain is Aspartic protease-like protein pynH (414 aa).

A signal peptide spans 1–19; sequence MFPCSRIWSLLVAAATASA. The Peptidase A1 domain maps to 43–410; sequence FLTDIALGTP…DFEKLQVGIA (368 aa). Residues asparagine 93, asparagine 102, asparagine 140, asparagine 151, asparagine 173, asparagine 202, asparagine 221, asparagine 258, asparagine 272, asparagine 335, and asparagine 366 are each glycosylated (N-linked (GlcNAc...) asparagine). Residues cysteine 333 and cysteine 371 are joined by a disulfide bond.

Belongs to the peptidase A1 family.

The protein operates within secondary metabolite biosynthesis. Functionally, aspartic protease-like protein; part of the gene cluster that mediates the biosynthesis of pyranonigrins, a family of antioxidative compounds. The first step of pyranonigrins biosynthesis is performed by the hybrid PKS-NRPS synthetase that condenses 6 malonyl-CoA units to an acetyl starter unit, to form a 1,3,5-trioxotetradecane-6,8-dienyl-ACP. The enoyl reductase (ER) domain of pynA is likely to be functional during the first two rounds of polyketide chain extension, to generate the saturated C-C bonds of the alkyl side chain. PynA subsequently forms the amide bond between the acyl chain and L-serine. Although pynA has a terminal reductase domain, it appears to require the thioesterase pynI for the release of the straight-chain intermediate from pynA via the formation of a tetramic acid pyranonigrin J. The methyltransferase pynC then coverts pyranonigrin J to pyranonigrin I via N-methylation. The FAD-dependent monooxygenase pynG catalyzes an epoxidation-mediated cyclization to form the dihydro-gamma-pyrone moiety, followed by pynD-catalyzed oxidation of the alcohol to the ketone and enolization to yield the characteristic tetramic acid-fused gamma-pyrone core of pyranonigrin H. Pyranonigrin H is substrate of pynH for dehydration-mediated exo-methylene formation from the serine side chain to produce pyranonigrin E, before the oxidase pynE reduces the exo-methylene of pyranonigrin E into a pendant methyl to form pyranonigrin G. The FAD-linked oxidoreductase pynB performs the reverse reaction and converts pyranonigrin G back to pyranonigrin E. The polypeptide is Aspartic protease-like protein pynH (Aspergillus niger (strain ATCC MYA-4892 / CBS 513.88 / FGSC A1513)).